Consider the following 111-residue polypeptide: BET1-like protein (111 aa).

At 1–86 (MADWARAQSP…MARSGRDNRK (86 aa)) the chain is on the cytoplasmic side. Residues S9 and S37 each carry the phosphoserine modification. One can recognise a t-SNARE coiled-coil homology domain in the interval 15-77 (EILDRENKRM…TGSVKRFSTM (63 aa)). The helical; Anchor for type IV membrane protein transmembrane segment at 87-107 (LLCGMAVGLIVAFFILSYFLS) threads the bilayer. Topologically, residues 108–111 (RART) are lumenal.

As to quaternary structure, component of a SNARE complex consisting of STX5, YKT6, GOSR1 and BET1L. Interacts with STX5.

It is found in the golgi apparatus membrane. The protein localises to the golgi apparatus. The protein resides in the trans-Golgi network membrane. Its function is as follows. Vesicle SNARE required for targeting and fusion of retrograde transport vesicles with the Golgi complex. Required for the integrity of the Golgi complex. The sequence is that of BET1-like protein from Pongo abelii (Sumatran orangutan).